A 426-amino-acid polypeptide reads, in one-letter code: Gamma-glutamyl phosphate reductase (426 aa).

This sequence belongs to the gamma-glutamyl phosphate reductase family.

The protein resides in the cytoplasm. The enzyme catalyses L-glutamate 5-semialdehyde + phosphate + NADP(+) = L-glutamyl 5-phosphate + NADPH + H(+). It participates in amino-acid biosynthesis; L-proline biosynthesis; L-glutamate 5-semialdehyde from L-glutamate: step 2/2. Its function is as follows. Catalyzes the NADPH-dependent reduction of L-glutamate 5-phosphate into L-glutamate 5-semialdehyde and phosphate. The product spontaneously undergoes cyclization to form 1-pyrroline-5-carboxylate. The sequence is that of Gamma-glutamyl phosphate reductase from Acidovorax ebreus (strain TPSY) (Diaphorobacter sp. (strain TPSY)).